The sequence spans 1362 residues: MTSSTDYHADSTPGTTSNMELRIREYQLEMLNESLKRNLIVVMPTGTGKTQVAILRILADIDKGNSDKFVWLLCPTVALSEQQYIQYATVFLPSGAEDKAIWDNALSGIKIAVSTYQVLYDALSHGFVKLSQMSLLIFDEAHHCKKDHVANKIMQVHYHKQHQSGVQNLPKILGLTASPILSDLSSLEIVESNLGSICKTPRQYYAQLLQFTNRPLILPRLPTYTIPNCSVKAPILEKLCGILSSEDEVPSSSKMKSKQLKHIRRFMQTSESINQELGIWAATEYMRKSIMHFKESMRMGAEKTNISNYGKDFAMEILTRLGKLQDCSPAIQPEEISPMCQCLLDELSKAYREGFCGLVFVTQRATVLALKWLIENHPLTSHLFTCGTFIGMSTTQYSKTELGNLHDIRNQTETLEKFRQGSLNLIITTDALEEGIDVPACNTVLNFNCQLSLKSFIQRRGRARRENSQFIIIMEDESGPRYLKRLEMEEIELVQKLQNAERRQIPANELDFDKYERISLSLDIDRTGAQLIMREAVGYLYNFCSKLPAQLYVSNKPLFTYERNNYGRFRAVVKLPSNLDPSLQSFSSSRSWSRLKYAREDAALQAYKALYQAGLVNDYLVPTQVSDHLEGDIIFRSHYSIQNQLDPWQDIALLWKLDSQLYAHNLRIIRPEEDEIHLHMILPTQLDTTIHIPLFIDYCTTYTAILTPGHPITTDISLCQQVTNLIFQSVYRDHCSRRNLDYAFLLVPELEETKLIEFLERYSGSVSLTELLNQEATPSALGLLRSHTRPSRPLLVEPWVAGECFLPDELSISSFDAKVKYMTNRRNFLSHGNLAAGKSTNCEARIGLEANVKSMSVRDFFVDKLPSMFAQVALFTPSISHEVEVYMIAQILRQELSLRSVTPWQRIDLLAIAIRPTSIEHRATFRLLAFIGDAFMKYLFAMQLFLHHHLWHEGLLSSLKQRNLSDAGLAHAIHQSGLGKFLISKHLNGKRWVPPLVSGIEPASNEARQRSIGAATLADMTKAVVGAAFTDGGLNQAAACASVMFPKLKSWNASSLHDGTYSKTRPENAVASTAIVDMEELLGYTFTDKSLAVESMTHPSCTGLVQTTSYRRLSFLGASVLEWIVVSYLHRHAQVMNPQRMQSLKSAFTNNTFLTFIAITFHQVREQNHIDVDDEHNVHKNVTTCSIRLWDFLRLHSDALSTELSDFVQKSSEKADAIKHELWEQRFYPWVRLRALGDMRVLSDIIQSIFGAVFIDSQATLASCDALAEKLGIVPLLEHFISHQITTDHPKDTLQAILPGRKVSYQICVDKVHPGTLRCSALADSSEIASVEGQMNDEVIKMQAAETAVRLLRKGFALSETS.

A Helicase ATP-binding domain is found at 30–197; it reads MLNESLKRNL…EIVESNLGSI (168 aa). 43–50 provides a ligand contact to ATP; the sequence is MPTGTGKT. A DEAH box motif is present at residues 139-142; that stretch reads DEAH. The Helicase C-terminal domain occupies 343–505; the sequence is LLDELSKAYR…KLQNAERRQI (163 aa). Positions 536 to 630 constitute a Dicer dsRNA-binding fold domain; sequence AVGYLYNFCS…VPTQVSDHLE (95 aa). RNase III domains follow at residues 889-1033 and 1075-1258; these read AQIL…TDGG and IVDM…IDSQ.

This sequence belongs to the helicase family. Dicer subfamily.

Dicer-like endonuclease involved in cleaving double-stranded RNA in the RNA interference (RNAi) pathway. Produces 21 to 25 bp dsRNAs (siRNAs) which target the selective destruction of homologous RNAs leading to sequence-specific suppression of gene expression, called post-transcriptional gene silencing (PTGS). Part of a broad host defense response against viral infection and transposons. This is Dicer-like protein 2-2 (dcl2-2) from Aspergillus niger (strain ATCC MYA-4892 / CBS 513.88 / FGSC A1513).